The chain runs to 167 residues: S-ribosylhomocysteine lyase (167 aa).

Fe cation-binding residues include histidine 54, histidine 58, and cysteine 128.

It belongs to the LuxS family. In terms of assembly, homodimer. Requires Fe cation as cofactor.

The catalysed reaction is S-(5-deoxy-D-ribos-5-yl)-L-homocysteine = (S)-4,5-dihydroxypentane-2,3-dione + L-homocysteine. Involved in the synthesis of autoinducer 2 (AI-2) which is secreted by bacteria and is used to communicate both the cell density and the metabolic potential of the environment. The regulation of gene expression in response to changes in cell density is called quorum sensing. Catalyzes the transformation of S-ribosylhomocysteine (RHC) to homocysteine (HC) and 4,5-dihydroxy-2,3-pentadione (DPD). This Haemophilus influenzae (strain 86-028NP) protein is S-ribosylhomocysteine lyase.